Reading from the N-terminus, the 405-residue chain is Nicotinate phosphoribosyltransferase (405 aa).

Residue His224 is modified to Phosphohistidine; by autocatalysis.

This sequence belongs to the NAPRTase family. Post-translationally, transiently phosphorylated on a His residue during the reaction cycle. Phosphorylation strongly increases the affinity for substrates and increases the rate of nicotinate D-ribonucleotide production. Dephosphorylation regenerates the low-affinity form of the enzyme, leading to product release.

It carries out the reaction nicotinate + 5-phospho-alpha-D-ribose 1-diphosphate + ATP + H2O = nicotinate beta-D-ribonucleotide + ADP + phosphate + diphosphate. The protein operates within cofactor biosynthesis; NAD(+) biosynthesis; nicotinate D-ribonucleotide from nicotinate: step 1/1. Catalyzes the synthesis of beta-nicotinate D-ribonucleotide from nicotinate and 5-phospho-D-ribose 1-phosphate at the expense of ATP. The polypeptide is Nicotinate phosphoribosyltransferase (Methanococcoides burtonii (strain DSM 6242 / NBRC 107633 / OCM 468 / ACE-M)).